We begin with the raw amino-acid sequence, 250 residues long: Proteasome subunit alpha type-4 (250 aa).

Belongs to the peptidase T1A family. As to quaternary structure, the 26S proteasome consists of a 20S proteasome core and two 19S regulatory subunits. The 20S proteasome core is composed of 28 subunits that are arranged in four stacked rings, resulting in a barrel-shaped structure. The two end rings are each formed by seven alpha subunits, and the two central rings are each formed by seven beta subunits. The catalytic chamber with the active sites is on the inside of the barrel.

The protein localises to the cytoplasm. It is found in the nucleus. Its function is as follows. The proteasome is a multicatalytic proteinase complex which is characterized by its ability to cleave peptides with Arg, Phe, Tyr, Leu, and Glu adjacent to the leaving group at neutral or slightly basic pH. The proteasome has an ATP-dependent proteolytic activity. This chain is Proteasome subunit alpha type-4 (PAC1), found in Spinacia oleracea (Spinach).